The primary structure comprises 427 residues: Tol-Pal system protein TolB (427 aa).

Positions 1–23 (MKLLKRLVSVFAIVLAVGSNAFA) are cleaved as a signal peptide.

It belongs to the TolB family. As to quaternary structure, the Tol-Pal system is composed of five core proteins: the inner membrane proteins TolA, TolQ and TolR, the periplasmic protein TolB and the outer membrane protein Pal. They form a network linking the inner and outer membranes and the peptidoglycan layer.

Its subcellular location is the periplasm. Its function is as follows. Part of the Tol-Pal system, which plays a role in outer membrane invagination during cell division and is important for maintaining outer membrane integrity. This Haemophilus influenzae (strain ATCC 51907 / DSM 11121 / KW20 / Rd) protein is Tol-Pal system protein TolB.